The sequence spans 691 residues: Protein 4.2 (691 aa).

Glycine 2 carries N-myristoyl glycine lipidation. The interval 31–39 (LTLRRGQSF) is band 3 binding. Serine 248 carries the phosphoserine modification. Phosphotyrosine is present on tyrosine 570.

Belongs to the transglutaminase superfamily. Transglutaminase family. As to quaternary structure, component of the ankyrin-1 complex in the erythrocyte, composed of ANK1, RHCE, RHAG, SLC4A1, EPB42, GYPA, GYPB and AQP1. Interacts with SLC4A1 (via the cytoplasmic domain); this interaction is mediated by the SLC4A1 Band 3-I dimer. Interacts with ANK1 (via ANK 1-13 repeats). Interacts with AQP1 (via the C-terminal).

It localises to the cell membrane. The protein localises to the cytoplasm. The protein resides in the cytoskeleton. Functionally, component of the ankyrin-1 complex, a multiprotein complex involved in the stability and shape of the erythrocyte membrane. The chain is Protein 4.2 from Mus musculus (Mouse).